The following is a 135-amino-acid chain: Small ribosomal subunit protein uS9 (135 aa).

The segment at 96–135 (SADNRKPLKTEGHLSRDPRAKERRKYGLKKARKAPQFSKR) is disordered. Basic and acidic residues predominate over residues 97–115 (ADNRKPLKTEGHLSRDPRA). Residues 116–135 (KERRKYGLKKARKAPQFSKR) show a composition bias toward basic residues.

This sequence belongs to the universal ribosomal protein uS9 family.

The protein is Small ribosomal subunit protein uS9 of Prochlorococcus marinus (strain MIT 9303).